A 469-amino-acid polypeptide reads, in one-letter code: Probable Xaa-Pro aminopeptidase PEPP (469 aa).

Residues Asp-257, Asp-268, Glu-391, and Glu-436 each contribute to the Mn(2+) site.

This sequence belongs to the peptidase M24B family. It depends on Mn(2+) as a cofactor.

The enzyme catalyses Release of any N-terminal amino acid, including proline, that is linked to proline, even from a dipeptide or tripeptide.. Its function is as follows. Catalyzes the removal of a penultimate prolyl residue from the N-termini of peptides. This chain is Probable Xaa-Pro aminopeptidase PEPP (PEPP), found in Fusarium vanettenii (strain ATCC MYA-4622 / CBS 123669 / FGSC 9596 / NRRL 45880 / 77-13-4) (Fusarium solani subsp. pisi).